The following is a 149-amino-acid chain: Transcription antitermination protein NusB (149 aa).

This sequence belongs to the NusB family.

Involved in transcription antitermination. Required for transcription of ribosomal RNA (rRNA) genes. Binds specifically to the boxA antiterminator sequence of the ribosomal RNA (rrn) operons. The polypeptide is Transcription antitermination protein NusB (Hahella chejuensis (strain KCTC 2396)).